The following is a 54-amino-acid chain: Ovomucoid (54 aa).

In terms of domain architecture, Kazal-like spans 4 to 54 (VDCSEYPKPVCSLEYMPLCGSDSQTYSNECNFCNAVVDSNGTLTLSHFGKC). 3 disulfide bridges follow: cysteine 6/cysteine 36, cysteine 14/cysteine 33, and cysteine 22/cysteine 54. Asparagine 43 carries N-linked (GlcNAc...) asparagine glycosylation.

Its subcellular location is the secreted. This chain is Ovomucoid, found in Caracara plancus (Southern caracara).